Consider the following 272-residue polypeptide: Shikimate dehydrogenase (NADP(+)) (272 aa).

Shikimate contacts are provided by residues 14–16 (SKS) and Thr61. Lys65 serves as the catalytic Proton acceptor. Glu77 is a binding site for NADP(+). Shikimate-binding residues include Asn86 and Asp102. NADP(+) is bound by residues 126–130 (GAGGA), 149–154 (NRTVFR), and Met213. Tyr215 is a binding site for shikimate. Gly237 is a binding site for NADP(+).

The protein belongs to the shikimate dehydrogenase family. Homodimer.

It catalyses the reaction shikimate + NADP(+) = 3-dehydroshikimate + NADPH + H(+). It participates in metabolic intermediate biosynthesis; chorismate biosynthesis; chorismate from D-erythrose 4-phosphate and phosphoenolpyruvate: step 4/7. In terms of biological role, involved in the biosynthesis of the chorismate, which leads to the biosynthesis of aromatic amino acids. Catalyzes the reversible NADPH linked reduction of 3-dehydroshikimate (DHSA) to yield shikimate (SA). The chain is Shikimate dehydrogenase (NADP(+)) from Escherichia coli O127:H6 (strain E2348/69 / EPEC).